The primary structure comprises 82 residues: DNA-directed RNA polymerase subunit Rpo5 (82 aa).

This sequence belongs to the archaeal Rpo5/eukaryotic RPB5 RNA polymerase subunit family. Part of the RNA polymerase complex.

The protein localises to the cytoplasm. The catalysed reaction is RNA(n) + a ribonucleoside 5'-triphosphate = RNA(n+1) + diphosphate. Its function is as follows. DNA-dependent RNA polymerase (RNAP) catalyzes the transcription of DNA into RNA using the four ribonucleoside triphosphates as substrates. The sequence is that of DNA-directed RNA polymerase subunit Rpo5 from Thermococcus kodakarensis (strain ATCC BAA-918 / JCM 12380 / KOD1) (Pyrococcus kodakaraensis (strain KOD1)).